A 258-amino-acid chain; its full sequence is Aspartate/glutamate leucyltransferase (258 aa).

It belongs to the R-transferase family. Bpt subfamily.

It localises to the cytoplasm. The enzyme catalyses N-terminal L-glutamyl-[protein] + L-leucyl-tRNA(Leu) = N-terminal L-leucyl-L-glutamyl-[protein] + tRNA(Leu) + H(+). It catalyses the reaction N-terminal L-aspartyl-[protein] + L-leucyl-tRNA(Leu) = N-terminal L-leucyl-L-aspartyl-[protein] + tRNA(Leu) + H(+). Functionally, functions in the N-end rule pathway of protein degradation where it conjugates Leu from its aminoacyl-tRNA to the N-termini of proteins containing an N-terminal aspartate or glutamate. The sequence is that of Aspartate/glutamate leucyltransferase from Rhodopseudomonas palustris (strain ATCC BAA-98 / CGA009).